The chain runs to 98 residues: Large ribosomal subunit protein uL23c (98 aa).

The protein belongs to the universal ribosomal protein uL23 family. In terms of assembly, part of the 50S ribosomal subunit.

It is found in the plastid. It localises to the chloroplast. Its function is as follows. Binds to 23S rRNA. The sequence is that of Large ribosomal subunit protein uL23c (rpl23) from Thalassiosira pseudonana (Marine diatom).